The following is a 250-amino-acid chain: 23S rRNA (guanosine-2'-O-)-methyltransferase RlmB (250 aa).

S-adenosyl-L-methionine contacts are provided by G198, L218, and L227.

This sequence belongs to the class IV-like SAM-binding methyltransferase superfamily. RNA methyltransferase TrmH family. RlmB subfamily.

The protein resides in the cytoplasm. It catalyses the reaction guanosine(2251) in 23S rRNA + S-adenosyl-L-methionine = 2'-O-methylguanosine(2251) in 23S rRNA + S-adenosyl-L-homocysteine + H(+). Its function is as follows. Specifically methylates the ribose of guanosine 2251 in 23S rRNA. This is 23S rRNA (guanosine-2'-O-)-methyltransferase RlmB from Pseudomonas syringae pv. tomato (strain ATCC BAA-871 / DC3000).